Reading from the N-terminus, the 113-residue chain is Large ribosomal subunit protein bL17 (113 aa).

The protein belongs to the bacterial ribosomal protein bL17 family. In terms of assembly, part of the 50S ribosomal subunit. Contacts protein L32.

This Clostridium beijerinckii (strain ATCC 51743 / NCIMB 8052) (Clostridium acetobutylicum) protein is Large ribosomal subunit protein bL17.